A 1050-amino-acid chain; its full sequence is Diacylglycerol kinase iota (1050 aa).

Disordered regions lie at residues 52 to 73 and 325 to 356; these read NPSS…SGSG and PQNS…ENKG. Positions 332 to 347 are enriched in basic residues; it reads SNRKKKRTSFKRKASK. The 136-residue stretch at 367 to 502 folds into the DAGKc domain; that stretch reads PLMKPLLVFV…DRWNLHVERN (136 aa). 2 ANK repeats span residues 943-972 and 979-1008; these read GHCS…AELL and TGET…SLRQ. The PDZ-binding signature appears at 1048 to 1050; that stretch reads TAV.

This sequence belongs to the eukaryotic diacylglycerol kinase family. As to quaternary structure, interacts (via PDZ-binding motif) with DLG4; controls the localization of DGKI to the synapse. Interacts (via PDZ-binding motif) with DLG1. Interacts (via PDZ-binding motif) with DLG2. Interacts (via PDZ-binding motif) with DLG3. May interact with RASGRP3; involved in the regulation of RASGRP3 activity. As to expression, specifically expressed in brain (at protein level). Expressed in hippocampus, cerebellum, brain stem and spinal cord (at protein level). Highly expressed in hippocampus, cerebellar cortex, olfactory bulb, and olfactory tubercle and to lower extent in the cerebral cortex, caudate putamen, and thalamus. Not detected in the white matter. Also expressed in eye. In terms of tissue distribution, major isoform in brain (at protein level). Minor isoform in brain (at protein level). As to expression, expressed in brain (at protein level).

It is found in the cell projection. It localises to the axon. The protein resides in the dendrite. The protein localises to the presynapse. Its subcellular location is the postsynapse. It is found in the postsynaptic density. It localises to the synaptic cell membrane. The protein resides in the cytoplasmic vesicle. The protein localises to the secretory vesicle. Its subcellular location is the synaptic vesicle membrane. It is found in the cytoplasm. It localises to the cytosol. The protein resides in the nucleus. It carries out the reaction a 1,2-diacyl-sn-glycerol + ATP = a 1,2-diacyl-sn-glycero-3-phosphate + ADP + H(+). It catalyses the reaction 1,2-di-(9Z-octadecenoyl)-sn-glycerol + ATP = 1,2-di-(9Z-octadecenoyl)-sn-glycero-3-phosphate + ADP + H(+). The enzyme catalyses 1-octadecanoyl-2-(9Z,12Z)-octadecadienoyl-sn-glycerol + ATP = 1-octadecanoyl-2-(9Z,12Z-octadecadienoyl)-sn-glycero-3-phosphate + ADP + H(+). The catalysed reaction is 1-octadecanoyl-2-(5Z,8Z,11Z,14Z-eicosatetraenoyl)-sn-glycerol + ATP = 1-octadecanoyl-2-(5Z,8Z,11Z,14Z-eicosatetraenoyl)-sn-glycero-3-phosphate + ADP + H(+). It participates in lipid metabolism; glycerolipid metabolism. With respect to regulation, activated by phosphatidylserine. Diacylglycerol kinase that converts diacylglycerol/DAG into phosphatidic acid/phosphatidate/PA and regulates the respective levels of these two bioactive lipids. Thereby, acts as a central switch between the signaling pathways activated by these second messengers with different cellular targets and opposite effects in numerous biological processes. Has probably no preference for any of the diacylglycerols in terms of the acyl chain composition, especially for the acyl chain at the sn-2 position. By controlling the diacylglycerol/DAG-mediated activation of RASGRP3, negatively regulates the Rap1 signaling pathway. May play a role in presynaptic diacylglycerol/DAG signaling and control neurotransmitter release during metabotropic glutamate receptor-dependent long-term depression. Functionally, has a decreased affinity for ATP and a reduced diacylglycerol kinase activity. Has no preference for any of the diacylglycerols in terms of the acyl chain composition. Its function is as follows. Has no diacylglycerol kinase activity. The chain is Diacylglycerol kinase iota from Rattus norvegicus (Rat).